The primary structure comprises 158 residues: MSHSIPLTKESYESLQEELKRLIRVERPKVIQDIAEARSHGDLSENAEYDAAKNRQGFIEGRIQELNSKLARAYVVDLSNMKPDKVVFGSTVTLYDTASEEEITYKIVGEDEADIKLGKISCTSPVGKALIGHKLDDSVKVKVPAGTKEYEIIDIKYE.

It belongs to the GreA/GreB family.

Necessary for efficient RNA polymerase transcription elongation past template-encoded arresting sites. The arresting sites in DNA have the property of trapping a certain fraction of elongating RNA polymerases that pass through, resulting in locked ternary complexes. Cleavage of the nascent transcript by cleavage factors such as GreA or GreB allows the resumption of elongation from the new 3'terminus. GreA releases sequences of 2 to 3 nucleotides. This chain is Transcription elongation factor GreA, found in Pelobacter propionicus (strain DSM 2379 / NBRC 103807 / OttBd1).